Consider the following 481-residue polypeptide: uncharacterized protein (481 aa).

The chain crosses the membrane as a helical span at residues 18-38; it reads FMIVTAIAVAIFVVITGVVIF.

It is found in the cell inner membrane. Functionally, involved in DNA conjugation in the recipient strain. This is an uncharacterized protein from Mycolicibacterium smegmatis (strain MKD8) (Mycobacterium smegmatis).